The sequence spans 60 residues: Mating pheromone En-2 (60 aa).

4 cysteine pairs are disulfide-bonded: Cys-11–Cys-39, Cys-24–Cys-35, Cys-31–Cys-57, and Cys-36–Cys-48.

It localises to the secreted. Functionally, mating ciliate pheromones (or gamones) are diffusible extracellular communication signals that distinguish different intraspecific classes of cells commonly referred to as 'mating types'. They prepare the latter for conjugation by changing their cell surface properties. The polypeptide is Mating pheromone En-2 (Euplotes nobilii (Ciliate)).